Here is a 430-residue protein sequence, read N- to C-terminus: tRNA(Ile)-lysidine synthase (430 aa).

24 to 29 serves as a coordination point for ATP; the sequence is SGGLDS.

Belongs to the tRNA(Ile)-lysidine synthase family.

The protein localises to the cytoplasm. The enzyme catalyses cytidine(34) in tRNA(Ile2) + L-lysine + ATP = lysidine(34) in tRNA(Ile2) + AMP + diphosphate + H(+). Its function is as follows. Ligates lysine onto the cytidine present at position 34 of the AUA codon-specific tRNA(Ile) that contains the anticodon CAU, in an ATP-dependent manner. Cytidine is converted to lysidine, thus changing the amino acid specificity of the tRNA from methionine to isoleucine. The protein is tRNA(Ile)-lysidine synthase of Haemophilus influenzae (strain ATCC 51907 / DSM 11121 / KW20 / Rd).